We begin with the raw amino-acid sequence, 96 residues long: Xylulose kinase (96 aa).

71–72 lines the substrate pocket; the sequence is QH.

The protein belongs to the FGGY kinase family.

The catalysed reaction is D-xylulose + ATP = D-xylulose 5-phosphate + ADP + H(+). Its function is as follows. Catalyzes the phosphorylation of D-xylulose to D-xylulose 5-phosphate. The chain is Xylulose kinase from Arthrobacter sp. (strain NRRL B3728).